Reading from the N-terminus, the 543-residue chain is Chaperonin GroEL (543 aa).

Residues Thr-29–Pro-32, Asp-86–Thr-90, Gly-413, Asp-478–Leu-480, and Asp-494 contribute to the ATP site. The tract at residues Pro-524–Tyr-543 is disordered.

Belongs to the chaperonin (HSP60) family. In terms of assembly, forms a cylinder of 14 subunits composed of two heptameric rings stacked back-to-back. Interacts with the co-chaperonin GroES.

The protein resides in the cytoplasm. It catalyses the reaction ATP + H2O + a folded polypeptide = ADP + phosphate + an unfolded polypeptide.. Functionally, together with its co-chaperonin GroES, plays an essential role in assisting protein folding. The GroEL-GroES system forms a nano-cage that allows encapsulation of the non-native substrate proteins and provides a physical environment optimized to promote and accelerate protein folding. The sequence is that of Chaperonin GroEL from Ruminiclostridium cellulolyticum (strain ATCC 35319 / DSM 5812 / JCM 6584 / H10) (Clostridium cellulolyticum).